We begin with the raw amino-acid sequence, 194 residues long: Inosine triphosphate pyrophosphatase (194 aa).

At A2 the chain carries N-acetylalanine. 14 to 19 contributes to the ITP binding site; it reads TGNAKK. E44 contributes to the Mg(2+) binding site. ITP-binding positions include K56, 72–73, K89, 149–152, K172, and 177–178; these read DT, FGWD, and HR.

Belongs to the HAM1 NTPase family. As to quaternary structure, homodimer. Requires Mg(2+) as cofactor. In terms of tissue distribution, ubiquitous. Highly expressed in heart, liver, sex glands, thyroid and adrenal gland.

It localises to the cytoplasm. The catalysed reaction is ITP + H2O = IMP + diphosphate + H(+). It carries out the reaction dITP + H2O = dIMP + diphosphate + H(+). It catalyses the reaction XTP + H2O = XMP + diphosphate + H(+). The enzyme catalyses N(6)-hydroxy-dATP + H2O = N(6)-hydroxy-dAMP + diphosphate + H(+). Functionally, pyrophosphatase that hydrolyzes the non-canonical purine nucleotides inosine triphosphate (ITP), deoxyinosine triphosphate (dITP) as well as 2'-deoxy-N-6-hydroxylaminopurine triphosphate (dHAPTP) and xanthosine 5'-triphosphate (XTP) to their respective monophosphate derivatives. The enzyme does not distinguish between the deoxy- and ribose forms. Probably excludes non-canonical purines from RNA and DNA precursor pools, thus preventing their incorporation into RNA and DNA and avoiding chromosomal lesions. The chain is Inosine triphosphate pyrophosphatase from Homo sapiens (Human).